The primary structure comprises 108 residues: Transcriptional activator HlyU (108 aa).

Positions Glu-13–Asn-107 constitute an HTH arsR-type domain. The segment at residues Val-47–Ala-66 is a DNA-binding region (H-T-H motif).

Up-regulates the expression of the hemolysin gene, hlyA, and may promote expression of other virulence determinants in vivo. It may have both positive and negative regulator activities. This Vibrio cholerae serotype O1 (strain ATCC 39315 / El Tor Inaba N16961) protein is Transcriptional activator HlyU (hlyU).